We begin with the raw amino-acid sequence, 403 residues long: Basic leucine zipper 25 (403 aa).

2 disordered regions span residues 13 to 128 (SFWP…APVV) and 156 to 259 (VKPE…EFDT). Residues 24–33 (PGSSSTPSPT) are compositionally biased toward low complexity. Over residues 56-69 (LSGSDSSPTTNTIE) the composition is skewed to polar residues. 2 stretches are compositionally biased toward low complexity: residues 115-128 (APSS…APVV) and 161-174 (SSAS…AQGS). A compositionally biased stretch (polar residues) spans 175–195 (IVAQTSPGASSVRFSPTTSTQ). Acidic residues predominate over residues 212–226 (DSDDDDLDGDADNGD). The residue at position 213 (S213) is a Phosphoserine. One can recognise a bZIP domain in the interval 229–292 (DVKRARRMLS…DAAAVDNRIL (64 aa)). Positions 231 to 250 (KRARRMLSNRESARRSRRRK) are basic motif. The Nuclear localization signal signature appears at 233-240 (ARRMLSNR). The interval 264–271 (LRAEHSTL) is leucine-zipper. The segment covering 332-345 (NTPSASSSIPPNSN) has biased composition (low complexity). Disordered regions lie at residues 332–361 (NTPS…SAGL) and 380–403 (EGMQ…NHKH). The span at 351–361 (ANSSTNTSAGL) shows a compositional bias: polar residues.

This sequence belongs to the bZIP family. Homodimer. Forms a heterodimer with BZIP1, BZIP1, BZIP2, BZIP9, BZIP11, BZIP44, BZIP53 and BZIP63. Interacts with ABI3 and forms a complex made of ABI3, BZIP53 and BZIP25. Expressed in roots, shoots, stems, leaves, stipulae, siliques, seeds, pollen, and flowers.

The protein localises to the nucleus. In terms of biological role, transcription factor that binds to the 5'-ACGT-3' box, especially present in G-box-like motif (5'-CCACGTGGCC-3'), ABRE elements, of seed storage protein (SSP) encoding gene promoters (e.g. At2S and CRU3) and promotes their expression in seeds when in complex with ABI3 and BZIP53. The chain is Basic leucine zipper 25 (BZIP25) from Arabidopsis thaliana (Mouse-ear cress).